The sequence spans 486 residues: Protein nucleotidyltransferase YdiU (486 aa).

Residues Gly90, Gly92, Arg93, Lys113, Asp125, Gly126, Arg176, and Arg183 each coordinate ATP. Asp252 functions as the Proton acceptor in the catalytic mechanism. Mg(2+) is bound by residues Asn253 and Asp262. Residue Asp262 participates in ATP binding.

Belongs to the SELO family. It depends on Mg(2+) as a cofactor. Mn(2+) is required as a cofactor.

The catalysed reaction is L-seryl-[protein] + ATP = 3-O-(5'-adenylyl)-L-seryl-[protein] + diphosphate. It catalyses the reaction L-threonyl-[protein] + ATP = 3-O-(5'-adenylyl)-L-threonyl-[protein] + diphosphate. It carries out the reaction L-tyrosyl-[protein] + ATP = O-(5'-adenylyl)-L-tyrosyl-[protein] + diphosphate. The enzyme catalyses L-histidyl-[protein] + UTP = N(tele)-(5'-uridylyl)-L-histidyl-[protein] + diphosphate. The catalysed reaction is L-seryl-[protein] + UTP = O-(5'-uridylyl)-L-seryl-[protein] + diphosphate. It catalyses the reaction L-tyrosyl-[protein] + UTP = O-(5'-uridylyl)-L-tyrosyl-[protein] + diphosphate. Nucleotidyltransferase involved in the post-translational modification of proteins. It can catalyze the addition of adenosine monophosphate (AMP) or uridine monophosphate (UMP) to a protein, resulting in modifications known as AMPylation and UMPylation. This Pseudomonas aeruginosa (strain LESB58) protein is Protein nucleotidyltransferase YdiU.